The primary structure comprises 432 residues: MSKIKKILSREILDSRGYPTIETEVHLKTGYFGYSSVPSGASTGSKEALELRDNDKNRFFGKGVKKAVNYVNTEIFQALKNKNAEEQKELDNLMIKLDGTKNKSRFGANAILSVSLSLAKAIALEKNIPFYSYISEINYSKNNFSIPLPMINIINGGMHANNNIDLQEFMIQPIGAKSILQAVQMGSEIFHMLGIILKEKGYSTCVGDEGGYAPNLKSNEEALSMISLAVERSNYKLNEDITFAIDCASSELFNKKTRRYRLKNENKEYNSIEFTHYLEKLTKKYPIRSIEDGQDESDWKGFQYQTKILGKKIQLVGDDLFVTNKKFLEYGIKKKAANSILIKLNQIGTLTETLETIKKAQENKYNVIISHRSGETEDTSIADLAVGTNAGQIKTGSMCRSDRTSKYNRLIKIEESLNTQKKTFKKKLNLFN.

Residue Gln-167 participates in (2R)-2-phosphoglycerate binding. Glu-209 acts as the Proton donor in catalysis. Mg(2+)-binding residues include Asp-246, Glu-291, and Asp-318. The (2R)-2-phosphoglycerate site is built by Lys-343, Arg-372, Ser-373, and Lys-394. Residue Lys-343 is the Proton acceptor of the active site.

It belongs to the enolase family. In terms of assembly, component of the RNA degradosome, a multiprotein complex involved in RNA processing and mRNA degradation. Mg(2+) serves as cofactor.

The protein localises to the cytoplasm. It is found in the secreted. Its subcellular location is the cell surface. The catalysed reaction is (2R)-2-phosphoglycerate = phosphoenolpyruvate + H2O. It functions in the pathway carbohydrate degradation; glycolysis; pyruvate from D-glyceraldehyde 3-phosphate: step 4/5. Its function is as follows. Catalyzes the reversible conversion of 2-phosphoglycerate (2-PG) into phosphoenolpyruvate (PEP). It is essential for the degradation of carbohydrates via glycolysis. The sequence is that of Enolase from Buchnera aphidicola subsp. Cinara cedri (strain Cc).